A 547-amino-acid polypeptide reads, in one-letter code: MAAPPLLSLSQRLLFLSLSLPKPQLAPNPSSFSPTRAASTAPPPPEGAGPAAPSRGDRFLGTQLAAEAAARVLAPEDAERRRRRREKRKALARKPSAAACYGCGAPLQTADEAAPGYVHPATYDLKKRHHQLRTVLCGRCKLLSHGHMITAVGGHGGYPGGKQFVSADQLRDKLSYLRHEKALIIKLVDIVDFNGSFLARVRDFAGANPIILVITKVDLLPRDTDLNCIGDWVVEAVVKKKLNVLSVHLTSSKSLVGVTGVISEIQQEKKGRDVYILGSANVGKSAFISAMLRTMAYKDPVAAAAQKYKPIQSAVPGTTLGPIQIEAFLGGGKLYDTPGVHLHHRQAAVIHADDLPSLAPQSRLRARCFPANDTDVGLSGNSLFWGGLVRIDVVKALPRTRLTFYGPKKLKINMVPTTEADEFYEREVGVTLTPPAGKEKAEGWVGLQGVRELQIKYEESDRPACDIAISGLGWVAVEPLGVPSSNPDESAEEEDNESGELHLRVHVPKPVEIFVRPPLPVGKAASQWYRYQELTEEEEELRPKWHY.

Residues 24–40 are compositionally biased toward low complexity; that stretch reads QLAPNPSSFSPTRAAST. Disordered stretches follow at residues 24–57 and 72–91; these read QLAP…SRGD and VLAP…RKAL. The segment covering 81–91 has biased composition (basic residues); the sequence is RRRRREKRKAL. One can recognise a CP-type G domain in the interval 167 to 343; it reads ADQLRDKLSY…LYDTPGVHLH (177 aa).

Belongs to the TRAFAC class YlqF/YawG GTPase family. NOA1 subfamily.

It catalyses the reaction 2 L-arginine + 3 NADPH + 4 O2 + H(+) = 2 L-citrulline + 2 nitric oxide + 3 NADP(+) + 4 H2O. Functionally, produces nitric oxide (NO) which is a messenger molecule involved in hormonal signaling and defense responses in plant. The polypeptide is Putative nitric oxide synthase (Oryza sativa subsp. japonica (Rice)).